The primary structure comprises 142 residues: Large ribosomal subunit protein mL42 (142 aa).

Residues 1–32 (MALAAVKWAISSRTMLKHLFPVENGALYCVGH) constitute a mitochondrion transit peptide.

This sequence belongs to the mitochondrion-specific ribosomal protein mL42 family. As to quaternary structure, component of the mitochondrial ribosome large subunit (39S) which comprises a 16S rRNA and about 50 distinct proteins. Component of the mitochondrial ribosome small subunit (28S) which comprises a 12S rRNA and about 30 distinct proteins.

It localises to the mitochondrion. In Bos taurus (Bovine), this protein is Large ribosomal subunit protein mL42 (MRPL42).